A 226-amino-acid polypeptide reads, in one-letter code: Phosphoglycolate phosphatase (226 aa).

D10 acts as the Nucleophile in catalysis. Mg(2+) contacts are provided by D10, D12, and D175.

Belongs to the HAD-like hydrolase superfamily. CbbY/CbbZ/Gph/YieH family. Mg(2+) serves as cofactor.

The catalysed reaction is 2-phosphoglycolate + H2O = glycolate + phosphate. The protein operates within organic acid metabolism; glycolate biosynthesis; glycolate from 2-phosphoglycolate: step 1/1. Its function is as follows. Specifically catalyzes the dephosphorylation of 2-phosphoglycolate. Is involved in the dissimilation of the intracellular 2-phosphoglycolate formed during the DNA repair of 3'-phosphoglycolate ends, a major class of DNA lesions induced by oxidative stress. The protein is Phosphoglycolate phosphatase of Vibrio cholerae serotype O1 (strain ATCC 39315 / El Tor Inaba N16961).